The primary structure comprises 74 residues: ATP synthase subunit c (74 aa).

The next 2 helical transmembrane spans lie at 9-29 (IAIAFMAFGMAGAALGVASIF) and 51-71 (LIGAGLAEAMGLFSFILAILL).

This sequence belongs to the ATPase C chain family. In terms of assembly, F-type ATPases have 2 components, F(1) - the catalytic core - and F(0) - the membrane proton channel. F(1) has five subunits: alpha(3), beta(3), gamma(1), delta(1), epsilon(1). F(0) has three main subunits: a(1), b(2) and c(10-14). The alpha and beta chains form an alternating ring which encloses part of the gamma chain. F(1) is attached to F(0) by a central stalk formed by the gamma and epsilon chains, while a peripheral stalk is formed by the delta and b chains.

It is found in the cell inner membrane. Functionally, f(1)F(0) ATP synthase produces ATP from ADP in the presence of a proton or sodium gradient. F-type ATPases consist of two structural domains, F(1) containing the extramembraneous catalytic core and F(0) containing the membrane proton channel, linked together by a central stalk and a peripheral stalk. During catalysis, ATP synthesis in the catalytic domain of F(1) is coupled via a rotary mechanism of the central stalk subunits to proton translocation. Key component of the F(0) channel; it plays a direct role in translocation across the membrane. A homomeric c-ring of between 10-14 subunits forms the central stalk rotor element with the F(1) delta and epsilon subunits. The polypeptide is ATP synthase subunit c (Orientia tsutsugamushi (strain Ikeda) (Rickettsia tsutsugamushi)).